The primary structure comprises 72 residues: Defensin-like protein 35 (72 aa).

The first 22 residues, 1–22 (MASNKISFSFVLCLYMCSLLDA), serve as a signal peptide directing secretion. Cystine bridges form between Cys32-Cys58, Cys44-Cys67, and Cys48-Cys69.

Belongs to the DEFL family.

It localises to the secreted. The sequence is that of Defensin-like protein 35 from Arabidopsis thaliana (Mouse-ear cress).